A 133-amino-acid chain; its full sequence is Pheromone-regulated membrane protein 3 (133 aa).

Topologically, residues 1–104 (MTAMKEDNAA…SKVQRENKGS (104 aa)) are nuclear. A disordered region spans residues 36-100 (ADGFVINKAK…DASESKVQRE (65 aa)). Positions 69-75 (GRVRKHK) match the Bipartite nuclear localization signal motif. Residues 90 to 100 (KDASESKVQRE) show a composition bias toward basic and acidic residues. Residues 105-127 (FYQGAIFGSFLGAAVTTVLSNLA) traverse the membrane as a helical segment. Residues 128–133 (VKALQN) lie on the Perinuclear space side of the membrane.

Interacts with KAR5.

Its subcellular location is the nucleus outer membrane. The protein resides in the cytoplasm. It is found in the cytoskeleton. It localises to the microtubule organizing center. The protein localises to the spindle pole body. Its function is as follows. Required for the fusion of nuclear envelopes during mating, ensuring proper karyogamy. Plays a role in the initiation of outer nuclear envelope fusion. The polypeptide is Pheromone-regulated membrane protein 3 (PRM3) (Saccharomyces cerevisiae (strain ATCC 204508 / S288c) (Baker's yeast)).